The primary structure comprises 112 residues: Integration host factor subunit alpha (112 aa).

Belongs to the bacterial histone-like protein family. In terms of assembly, heterodimer of an alpha and a beta chain.

This protein is one of the two subunits of integration host factor, a specific DNA-binding protein that functions in genetic recombination as well as in transcriptional and translational control. The protein is Integration host factor subunit alpha of Rhizobium etli (strain CIAT 652).